The sequence spans 69 residues: MPSVIFGLLALAIGLLGLTAWWWSVTEFLRGAVPVALIIFGLVALAAGVQSVRVPPAGKRANSDPNIDG.

At 1–2 the chain is on the cytoplasmic side; it reads MP. The helical transmembrane segment at 3 to 23 threads the bilayer; the sequence is SVIFGLLALAIGLLGLTAWWW. At 24-31 the chain is on the lumenal side; sequence SVTEFLRG. Residues 32-52 traverse the membrane as a helical segment; the sequence is AVPVALIIFGLVALAAGVQSV. Topologically, residues 53–69 are cytoplasmic; sequence RVPPAGKRANSDPNIDG.

This sequence belongs to the magnetosome MamI protein family.

Its subcellular location is the magnetosome membrane. In terms of biological role, may be involved in an early stage of magnetosome nucleation. Not essential for formation of magnetosome membrane vesicles, it is probably functionally redundant with other proteins. May bind magnetite. One of 7 genes (mamLQBIEMO) able to induce magnetosome membrane biogenesis; coexpression of mamLQRBIEMO in a deletion of the 17 gene mamAB operon restores magnetosome vesicle formation but not magnetite biosynthesis. The chain is Magnetosome protein MamI from Magnetospirillum gryphiswaldense (strain DSM 6361 / JCM 21280 / NBRC 15271 / MSR-1).